Here is a 769-residue protein sequence, read N- to C-terminus: TSC22 domain family protein 2 (769 aa).

Disordered stretches follow at residues 20–86, 224–292, 334–353, and 520–563; these read AQVA…TVSP, HGLD…PQPM, AQPG…YPQP, and VPAP…SLPQ. The span at 28 to 37 shows a compositional bias: acidic residues; it reads EDTESLDDPD. Residues 229 to 252 are compositionally biased toward polar residues; it reads GTDSSLTAVSQLPPSEKMSQPTLA. Residues 269-279 show a composition bias toward low complexity; sequence GGAVAPSSASL. The span at 531-541 shows a compositional bias: low complexity; the sequence is SSHTPVSRSSS. Residues 542–563 are compositionally biased toward polar residues; that stretch reads VIQQVGSPLAQGTHSAPTSLPQ. Residues 691–725 are a coiled coil; sequence MYAVREEVEVLKEQIKELVERNSLLERENALLKSL. Positions 726–745 are enriched in polar residues; it reads SNNDQLSQLPAQQANPGSTS. A disordered region spans residues 726 to 769; sequence SNNDQLSQLPAQQANPGSTSQQQAMIAQPPQPTQPPQQPNVSSA. Positions 754–763 are enriched in pro residues; the sequence is PPQPTQPPQQ.

The protein belongs to the TSC-22/Dip/Bun family. As to quaternary structure, interacts with NRBP1. Interacts with PKM isoform M2; the interaction results in reduced nuclear levels of PKM isoform M2, leading to repression of cyclin CCND1 transcription and reduced cell growth. Interacts with WDR77. In terms of tissue distribution, expressed in the cortex, medulla and papilla of the kidney. Expressed in the kidney.

Functionally, reduces the level of nuclear PKM isoform M2 which results in repression of cyclin CCND1 transcription and reduced cell growth. May protect kidney cells from hyperosmotic stress. The protein is TSC22 domain family protein 2 of Mus musculus (Mouse).